The following is a 306-amino-acid chain: Ribonuclease Z (306 aa).

7 residues coordinate Zn(2+): His-61, His-63, Asp-65, His-66, His-137, Asp-207, and His-263. Asp-65 acts as the Proton acceptor in catalysis.

Belongs to the RNase Z family. As to quaternary structure, homodimer. Requires Zn(2+) as cofactor.

The enzyme catalyses Endonucleolytic cleavage of RNA, removing extra 3' nucleotides from tRNA precursor, generating 3' termini of tRNAs. A 3'-hydroxy group is left at the tRNA terminus and a 5'-phosphoryl group is left at the trailer molecule.. In terms of biological role, zinc phosphodiesterase, which displays some tRNA 3'-processing endonuclease activity. Probably involved in tRNA maturation, by removing a 3'-trailer from precursor tRNA. The polypeptide is Ribonuclease Z (Thermococcus sibiricus (strain DSM 12597 / MM 739)).